The primary structure comprises 261 residues: LIM and SH3 domain protein 1 (261 aa).

The residue at position 1 (methionine 1) is an N-acetylmethionine. Residues 5–56 form the LIM zinc-binding domain; it reads CARCGKIVYPTEKVNCLDKFWHKACFHCETCKMTLNMKNYKGYEKKPYCNAH. At lysine 42 the chain carries N6-acetyllysine. 2 Nebulin repeats span residues 61–95 and 97–131; these read SFTMVADTPENLRLKQQSELQSQVRYKEEFEKNKG and GFSVVADTPELQRIKKTQDQISNIKYHEEFEKSRM. A Phosphothreonine modification is found at threonine 68. Lysine 75 carries the post-translational modification N6-methyllysine. Serine 99 carries the post-translational modification Phosphoserine. Threonine 104 is subject to Phosphothreonine. The disordered stretch occupies residues 111–186; sequence KKTQDQISNI…QPVAQSYGGY (76 aa). Position 112 is an N6-succinyllysine (lysine 112). Serine 118 is modified (phosphoserine). The span at 121–130 shows a compositional bias: basic and acidic residues; that stretch reads KYHEEFEKSR. Serine 134 and serine 146 each carry phosphoserine. Residues 167–183 show a composition bias toward low complexity; that stretch reads SAPVYQQPQQQPVAQSY. One can recognise an SH3 domain in the interval 202-261; that stretch reads GGGKRYRAVYDYSAADEDEVSFQDGDTIVNVQQIDDGWMYGTVERTGDTGMLPANYVEAI.

Interacts with F-actin. Interacts with ANKRD54. Interacts with KBTBD10.

Its subcellular location is the cytoplasm. The protein resides in the cell cortex. The protein localises to the cytoskeleton. In terms of biological role, plays an important role in the regulation of dynamic actin-based, cytoskeletal activities. Agonist-dependent changes in LASP1 phosphorylation may also serve to regulate actin-associated ion transport activities, not only in the parietal cell but also in certain other F-actin-rich secretory epithelial cell types. This chain is LIM and SH3 domain protein 1 (LASP1), found in Homo sapiens (Human).